Here is a 261-residue protein sequence, read N- to C-terminus: Secreted RxLR effector protein 154 (261 aa).

Positions 1 to 18 (MRRCALLFRLFLISYSCS) are cleaved as a signal peptide. The RxLR-dEER motif lies at 49–64 (RILQADDPEHIRTEER).

It belongs to the RxLR effector family.

The protein resides in the secreted. Its subcellular location is the host cell membrane. In terms of biological role, secreted effector that completely suppresses the host cell death induced by cell death-inducing proteins. This is Secreted RxLR effector protein 154 from Plasmopara viticola (Downy mildew of grapevine).